The sequence spans 138 residues: Mitochondrial import inner membrane translocase subunit tim-16 (138 aa).

Residues 32-43 show a composition bias toward low complexity; it reads TQQAAARHAAAT. 2 disordered regions span residues 32–58 and 118–138; these read TQQA…NANA and LSRL…NSKE. The span at 44-56 shows a compositional bias: polar residues; the sequence is GQSPSETKENANA. The J-like stretch occupies residues 66-119; sequence ESLQILNVKTPLNREDVEKHYEHLFAINDKAKGGTFYLQSKVYRAKERIDEELS.

The protein belongs to the TIM16/PAM16 family. In terms of assembly, probable component of the PAM complex at least composed of a mitochondrial HSP70 protein, GrpE, tim-44, tim-16 and tim-14. Associates with the TIM23 complex.

The protein localises to the mitochondrion inner membrane. In terms of biological role, regulates ATP-dependent protein translocation into the mitochondrial matrix. This chain is Mitochondrial import inner membrane translocase subunit tim-16, found in Caenorhabditis briggsae.